The primary structure comprises 133 residues: Profilin Sal k 4.0201 (133 aa).

A disulfide bond links C95 and C117.

Belongs to the profilin family. Occurs in many kinds of cells as a complex with monomeric actin in a 1:1 ratio. In terms of tissue distribution, expressed in pollen (at protein and mRNA level).

Its subcellular location is the cytoplasm. The protein resides in the cytoskeleton. Binds to actin and affects the structure of the cytoskeleton. At high concentrations, profilin prevents the polymerization of actin, whereas it enhances it at low concentrations. The sequence is that of Profilin Sal k 4.0201 from Kali turgidum (Prickly saltwort).